The following is a 173-amino-acid chain: Large ribosomal subunit protein uL10 (173 aa).

The protein belongs to the universal ribosomal protein uL10 family. In terms of assembly, part of the ribosomal stalk of the 50S ribosomal subunit. The N-terminus interacts with L11 and the large rRNA to form the base of the stalk. The C-terminus forms an elongated spine to which L12 dimers bind in a sequential fashion forming a multimeric L10(L12)X complex.

In terms of biological role, forms part of the ribosomal stalk, playing a central role in the interaction of the ribosome with GTP-bound translation factors. The protein is Large ribosomal subunit protein uL10 of Beutenbergia cavernae (strain ATCC BAA-8 / DSM 12333 / CCUG 43141 / JCM 11478 / NBRC 16432 / NCIMB 13614 / HKI 0122).